Consider the following 207-residue polypeptide: Urease accessory protein UreG (207 aa).

12-19 (GPVGAGKT) lines the GTP pocket.

Belongs to the SIMIBI class G3E GTPase family. UreG subfamily. As to quaternary structure, homodimer. UreD, UreF and UreG form a complex that acts as a GTP-hydrolysis-dependent molecular chaperone, activating the urease apoprotein by helping to assemble the nickel containing metallocenter of UreC. The UreE protein probably delivers the nickel.

Its subcellular location is the cytoplasm. Facilitates the functional incorporation of the urease nickel metallocenter. This process requires GTP hydrolysis, probably effectuated by UreG. The sequence is that of Urease accessory protein UreG from Cereibacter sphaeroides (strain ATCC 17029 / ATH 2.4.9) (Rhodobacter sphaeroides).